The sequence spans 98 residues: Citrate lyase acyl carrier protein (98 aa).

Serine 14 carries the post-translational modification O-(phosphoribosyl dephospho-coenzyme A)serine.

This sequence belongs to the CitD family. Oligomer with a subunit composition of (alpha,beta,gamma)6.

Its subcellular location is the cytoplasm. Functionally, covalent carrier of the coenzyme of citrate lyase. This chain is Citrate lyase acyl carrier protein, found in Citrobacter koseri (strain ATCC BAA-895 / CDC 4225-83 / SGSC4696).